Consider the following 464-residue polypeptide: Cysteine--tRNA ligase (464 aa).

Zn(2+) is bound at residue Cys-28. Residues 30–40 (VTVYDFCHIGH) carry the 'HIGH' region motif. The Zn(2+) site is built by Cys-209, His-234, and Glu-238. Residues 266 to 270 (KMSKS) carry the 'KMSKS' region motif. An ATP-binding site is contributed by Lys-269.

The protein belongs to the class-I aminoacyl-tRNA synthetase family. In terms of assembly, monomer. Zn(2+) serves as cofactor.

The protein resides in the cytoplasm. The enzyme catalyses tRNA(Cys) + L-cysteine + ATP = L-cysteinyl-tRNA(Cys) + AMP + diphosphate. This chain is Cysteine--tRNA ligase (cysS), found in Buchnera aphidicola subsp. Acyrthosiphon pisum (strain APS) (Acyrthosiphon pisum symbiotic bacterium).